The following is a 130-amino-acid chain: Methylglyoxal synthase (130 aa).

The MGS-like domain maps to 1–130 (MSKPRIALIA…DLARNMQDVC (130 aa)). Residues His11, Lys15, 37–40 (TGTT), and 57–58 (SG) each bind substrate. Asp63 serves as the catalytic Proton donor/acceptor. His90 is a binding site for substrate.

This sequence belongs to the methylglyoxal synthase family.

It carries out the reaction dihydroxyacetone phosphate = methylglyoxal + phosphate. Functionally, catalyzes the formation of methylglyoxal from dihydroxyacetone phosphate. This Burkholderia lata (strain ATCC 17760 / DSM 23089 / LMG 22485 / NCIMB 9086 / R18194 / 383) protein is Methylglyoxal synthase.